The following is a 321-amino-acid chain: Probable arabinan endo-1,5-alpha-L-arabinosidase A (321 aa).

The signal sequence occupies residues 1 to 19; it reads MHPSTFVTTIACLAGLAHG. Aspartate 34 acts as the Proton acceptor in catalysis. Glutamate 200 serves as the catalytic Proton donor.

Belongs to the glycosyl hydrolase 43 family.

It localises to the secreted. It carries out the reaction Endohydrolysis of (1-&gt;5)-alpha-arabinofuranosidic linkages in (1-&gt;5)-arabinans.. It functions in the pathway glycan metabolism; L-arabinan degradation. Endo-1,5-alpha-L-arabinanase involved in degradation of pectin. Its preferred substrate is linear 1,5-alpha-L-arabinan. The sequence is that of Probable arabinan endo-1,5-alpha-L-arabinosidase A (abnA) from Aspergillus clavatus (strain ATCC 1007 / CBS 513.65 / DSM 816 / NCTC 3887 / NRRL 1 / QM 1276 / 107).